The sequence spans 300 residues: Glutamyl-Q tRNA(Asp) synthetase (300 aa).

L-glutamate contacts are provided by residues 8-12 and glutamate 44; that span reads RFAPS. Residues 11 to 21 carry the 'HIGH' region motif; it reads PSPTGALHAGS. Residues cysteine 100, cysteine 102, tyrosine 126, and cysteine 130 each coordinate Zn(2+). 2 residues coordinate L-glutamate: tyrosine 190 and arginine 208. The 'KMSKS' region motif lies at 246-250; the sequence is KLSKQ. Position 249 (lysine 249) interacts with ATP.

Belongs to the class-I aminoacyl-tRNA synthetase family. GluQ subfamily. Zn(2+) is required as a cofactor.

In terms of biological role, catalyzes the tRNA-independent activation of glutamate in presence of ATP and the subsequent transfer of glutamate onto a tRNA(Asp). Glutamate is transferred on the 2-amino-5-(4,5-dihydroxy-2-cyclopenten-1-yl) moiety of the queuosine in the wobble position of the QUC anticodon. This Leptothrix cholodnii (strain ATCC 51168 / LMG 8142 / SP-6) (Leptothrix discophora (strain SP-6)) protein is Glutamyl-Q tRNA(Asp) synthetase.